The sequence spans 465 residues: MGSKTPNDHRRGPNVESSPHAAIDTINPPKHAAASGLLHGPLEGETEDGEDEDDDKTGADLKSVGQLNNSTKKKNKRKKNKKKKKTLLGGLQTTPPRVALSSIFYNQRYPEAEIVGYTTNNDNLQRITAEEFRHLCVVNDMDDEFLNDYRKAAEVHRQVRQYVQTITKPGIAMSQLAQEIEDGVRALTDHQGIETGDALKAGMAFPTGLCLNNIGAHWTPNPGAKEVILQYDDVLKVDFGVHVNGRIVDSAYTMAFNPVYDDLLTAVKAATNTGLKEAGIDARIDCISEAIQEVMESYEVELNRKIIPVKAVRNITGHNILRYKIHGDKQVPFVKTHTNQRMEEGDIFAIETFGSTGKAYLDDDIGIYGYFCDEHASAAGLHHSSAKSLLKTIKDNFGTLVFSRRYLERLGVKSYHLGMRSLVSKGIVQSYAPLVDVPGSYVAQFEHTVLLRPNCKEVISRGDDY.

Positions 1-13 (MGSKTPNDHRRGP) are enriched in basic and acidic residues. The tract at residues 1-92 (MGSKTPNDHR…KKKTLLGGLQ (92 aa)) is disordered. Residues 44 to 55 (GETEDGEDEDDD) are compositionally biased toward acidic residues. Basic residues predominate over residues 71-86 (TKKKNKRKKNKKKKKT). Histidine 217 serves as a coordination point for substrate. A divalent metal cation contacts are provided by aspartate 238, aspartate 249, and histidine 318. Position 326 (histidine 326) interacts with substrate. Glutamate 351 and glutamate 446 together coordinate a divalent metal cation.

It belongs to the peptidase M24A family. Methionine aminopeptidase eukaryotic type 2 subfamily. Requires Co(2+) as cofactor. Zn(2+) serves as cofactor. It depends on Mn(2+) as a cofactor. Fe(2+) is required as a cofactor.

It localises to the cytoplasm. The catalysed reaction is Release of N-terminal amino acids, preferentially methionine, from peptides and arylamides.. In terms of biological role, cotranslationally removes the N-terminal methionine from nascent proteins. The N-terminal methionine is often cleaved when the second residue in the primary sequence is small and uncharged (Met-Ala-, Cys, Gly, Pro, Ser, Thr, or Val). In Blastomyces gilchristii (strain SLH14081) (Blastomyces dermatitidis), this protein is Methionine aminopeptidase 2-2.